The chain runs to 358 residues: MDVVEVATPGGSYPIHIGPGRLDALDASIPADATAIAVVTNPTVAGLYGARVEAALARTGKRVLRIELPDGEAHKDWQTLNLIFDALLENRLDRRAVLVALGGGVIGDMTGFAAAVYMRGIRFVQVPTTLLAQVDSSVGGKTAVNHPLGKNMIGAFYQPVAVEIDTEVLGTLPAREVSAGLAEVIKYGLILDAGFWQWCEDNVGALRALEPRALAYAIRRSCELKAQVVGQDERESGLRAILNLGHTFGHAIESGLGYGEWLHGEAVGCGMVQAAELSTLAAGFPAADVQRVRDLVREIGCPTVAPDLGAERWLALMQVDKKTEGGEIRFVLMPRIGQALSRAAPEADVRTALERTTR.

Residues 70–75, 104–108, 128–129, lysine 141, and lysine 150 contribute to the NAD(+) site; these read DGEAHK, GVIGD, and TT. Zn(2+)-binding residues include glutamate 183, histidine 246, and histidine 263.

This sequence belongs to the sugar phosphate cyclases superfamily. Dehydroquinate synthase family. NAD(+) is required as a cofactor. The cofactor is Co(2+). Zn(2+) serves as cofactor.

The protein resides in the cytoplasm. The enzyme catalyses 7-phospho-2-dehydro-3-deoxy-D-arabino-heptonate = 3-dehydroquinate + phosphate. It functions in the pathway metabolic intermediate biosynthesis; chorismate biosynthesis; chorismate from D-erythrose 4-phosphate and phosphoenolpyruvate: step 2/7. Catalyzes the conversion of 3-deoxy-D-arabino-heptulosonate 7-phosphate (DAHP) to dehydroquinate (DHQ). This is 3-dehydroquinate synthase from Bordetella bronchiseptica (strain ATCC BAA-588 / NCTC 13252 / RB50) (Alcaligenes bronchisepticus).